Here is a 345-residue protein sequence, read N- to C-terminus: Biotin synthase (345 aa).

A Radical SAM core domain is found at glutamine 38–serine 256. Cysteine 53, cysteine 57, and cysteine 60 together coordinate [4Fe-4S] cluster. Residues cysteine 97, cysteine 128, cysteine 188, and arginine 260 each coordinate [2Fe-2S] cluster.

The protein belongs to the radical SAM superfamily. Biotin synthase family. Homodimer. The cofactor is [4Fe-4S] cluster. [2Fe-2S] cluster serves as cofactor.

It catalyses the reaction (4R,5S)-dethiobiotin + (sulfur carrier)-SH + 2 reduced [2Fe-2S]-[ferredoxin] + 2 S-adenosyl-L-methionine = (sulfur carrier)-H + biotin + 2 5'-deoxyadenosine + 2 L-methionine + 2 oxidized [2Fe-2S]-[ferredoxin]. It functions in the pathway cofactor biosynthesis; biotin biosynthesis; biotin from 7,8-diaminononanoate: step 2/2. Its function is as follows. Catalyzes the conversion of dethiobiotin (DTB) to biotin by the insertion of a sulfur atom into dethiobiotin via a radical-based mechanism. The chain is Biotin synthase from Photorhabdus laumondii subsp. laumondii (strain DSM 15139 / CIP 105565 / TT01) (Photorhabdus luminescens subsp. laumondii).